Consider the following 255-residue polypeptide: Imidazole glycerol phosphate synthase subunit HisF (255 aa).

Catalysis depends on residues D12 and D131.

This sequence belongs to the HisA/HisF family. Heterodimer of HisH and HisF.

It localises to the cytoplasm. The enzyme catalyses 5-[(5-phospho-1-deoxy-D-ribulos-1-ylimino)methylamino]-1-(5-phospho-beta-D-ribosyl)imidazole-4-carboxamide + L-glutamine = D-erythro-1-(imidazol-4-yl)glycerol 3-phosphate + 5-amino-1-(5-phospho-beta-D-ribosyl)imidazole-4-carboxamide + L-glutamate + H(+). Its pathway is amino-acid biosynthesis; L-histidine biosynthesis; L-histidine from 5-phospho-alpha-D-ribose 1-diphosphate: step 5/9. In terms of biological role, IGPS catalyzes the conversion of PRFAR and glutamine to IGP, AICAR and glutamate. The HisF subunit catalyzes the cyclization activity that produces IGP and AICAR from PRFAR using the ammonia provided by the HisH subunit. This is Imidazole glycerol phosphate synthase subunit HisF from Vesicomyosocius okutanii subsp. Calyptogena okutanii (strain HA).